A 397-amino-acid chain; its full sequence is Enoyl-[acyl-carrier-protein] reductase [NADH] (397 aa).

NAD(+) is bound by residues 48 to 53 (GASTGY), 74 to 75 (FE), 111 to 112 (DA), and 139 to 140 (LA). Residue Tyr-225 participates in substrate binding. Tyr-235 functions as the Proton donor in the catalytic mechanism. Residues Lys-244 and 273 to 275 (VVT) contribute to the NAD(+) site.

The protein belongs to the TER reductase family. In terms of assembly, monomer.

The catalysed reaction is a 2,3-saturated acyl-[ACP] + NAD(+) = a (2E)-enoyl-[ACP] + NADH + H(+). It participates in lipid metabolism; fatty acid biosynthesis. Functionally, involved in the final reduction of the elongation cycle of fatty acid synthesis (FAS II). Catalyzes the reduction of a carbon-carbon double bond in an enoyl moiety that is covalently linked to an acyl carrier protein (ACP). In Pseudoalteromonas translucida (strain TAC 125), this protein is Enoyl-[acyl-carrier-protein] reductase [NADH].